Reading from the N-terminus, the 253-residue chain is ATP synthase subunit b 2 (253 aa).

Residues Val9–Tyr27 form a helical membrane-spanning segment.

It belongs to the ATPase B chain family. As to quaternary structure, F-type ATPases have 2 components, F(1) - the catalytic core - and F(0) - the membrane proton channel. F(1) has five subunits: alpha(3), beta(3), gamma(1), delta(1), epsilon(1). F(0) has three main subunits: a(1), b(2) and c(10-14). The alpha and beta chains form an alternating ring which encloses part of the gamma chain. F(1) is attached to F(0) by a central stalk formed by the gamma and epsilon chains, while a peripheral stalk is formed by the delta and b chains.

The protein localises to the cell inner membrane. Its function is as follows. F(1)F(0) ATP synthase produces ATP from ADP in the presence of a proton or sodium gradient. F-type ATPases consist of two structural domains, F(1) containing the extramembraneous catalytic core and F(0) containing the membrane proton channel, linked together by a central stalk and a peripheral stalk. During catalysis, ATP synthesis in the catalytic domain of F(1) is coupled via a rotary mechanism of the central stalk subunits to proton translocation. Functionally, component of the F(0) channel, it forms part of the peripheral stalk, linking F(1) to F(0). This is ATP synthase subunit b 2 from Methylococcus capsulatus (strain ATCC 33009 / NCIMB 11132 / Bath).